The chain runs to 369 residues: Serine proteinase inhibitor 1 (369 aa).

The protein belongs to the serpin family. Poxviruses subfamily.

Functionally, important in virulence. This is Serine proteinase inhibitor 1 (SPI-1) from Oryctolagus cuniculus (Rabbit).